Reading from the N-terminus, the 225-residue chain is Ribonuclease 3 (225 aa).

Positions 7 to 129 (IPRLCRTLGY…IIGAVYLDSD (123 aa)) constitute an RNase III domain. Glu42 lines the Mg(2+) pocket. Residue Asp46 is part of the active site. Mg(2+) is bound by residues Asp115 and Glu118. The active site involves Glu118. The DRBM domain maps to 155-225 (DPKTLLQELL…AAQALELIKR (71 aa)).

The protein belongs to the ribonuclease III family. In terms of assembly, homodimer. Requires Mg(2+) as cofactor.

The protein resides in the cytoplasm. It carries out the reaction Endonucleolytic cleavage to 5'-phosphomonoester.. Its function is as follows. Digests double-stranded RNA. Involved in the processing of primary rRNA transcript to yield the immediate precursors to the large and small rRNAs (23S and 16S). Processes some mRNAs, and tRNAs when they are encoded in the rRNA operon. Processes pre-crRNA and tracrRNA of type II CRISPR loci if present in the organism. This is Ribonuclease 3 from Shewanella woodyi (strain ATCC 51908 / MS32).